A 78-amino-acid chain; its full sequence is MSQVCQVTGKRPVTGNNVSHSQRKTRRRFVPNLHTHRFWVEGEKRFVKLRVSSKGMRIIDKKGIEEVLSDIRKRGDRV.

The disordered stretch occupies residues 1–24 (MSQVCQVTGKRPVTGNNVSHSQRK).

It belongs to the bacterial ribosomal protein bL28 family.

The polypeptide is Large ribosomal subunit protein bL28 (Chromohalobacter salexigens (strain ATCC BAA-138 / DSM 3043 / CIP 106854 / NCIMB 13768 / 1H11)).